The chain runs to 139 residues: Cystatin-1 (139 aa).

The N-terminal stretch at methionine 1 to proline 22 is a signal peptide. In terms of domain architecture, Cystatin spans glycine 27–tryptophan 127. Positions glutamine 71–glycine 75 match the Secondary area of contact motif. Intrachain disulfides connect cysteine 89-cysteine 105 and cysteine 118-cysteine 138.

This sequence belongs to the cystatin family. In terms of tissue distribution, expressed by the venom gland.

The protein localises to the secreted. Its function is as follows. Inhibits various C1 cysteine proteases including cathepsin L, papain and cathepsin B. This protein has no toxic activity and its function in the venom is unknown. It may play a role as housekeeping or regulatory protein. The chain is Cystatin-1 from Crotalus adamanteus (Eastern diamondback rattlesnake).